We begin with the raw amino-acid sequence, 555 residues long: Vacuolar fusion protein MON1 homolog A (555 aa).

Residues 1 to 12 (MAADMQRKRSSE) are compositionally biased toward basic and acidic residues. The segment at 1 to 90 (MAADMQRKRS…PPLATDMRQI (90 aa)) is disordered. Residues serine 31 and serine 56 each carry the phosphoserine modification. Threonine 61 carries the post-translational modification Phosphothreonine. Residue serine 91 is modified to Phosphoserine. The segment at 112-149 (MLPGSSEDWPESPGAARRPATEPPRDGAGEGDEEEAAE) is disordered. Basic and acidic residues predominate over residues 130–139 (PATEPPRDGA).

This sequence belongs to the MON1/SAND family. In terms of assembly, interacts with CCZ1. Found in a complex with RMC1, CCZ1, MON1A and MON1B. The MON1A-CCZ1B complex interacts with RIMOC1. The MON1A-CCZ1B complex interacts with RAB7A and this interaction is enhanced in the presence of RIMOC1.

Its function is as follows. Plays an important role in membrane trafficking through the secretory apparatus. Not involved in endocytic trafficking to lysosomes. Acts in concert with CCZ1, as a guanine exchange factor (GEF) for RAB7, promotes the exchange of GDP to GTP, converting it from an inactive GDP-bound form into an active GTP-bound form. The chain is Vacuolar fusion protein MON1 homolog A (MON1A) from Bos taurus (Bovine).